The chain runs to 346 residues: NADH-ubiquinone oxidoreductase chain 2 (346 aa).

A run of 10 helical transmembrane segments spans residues 25–45 (NLLL…PLLA), 56–76 (ATKY…VIIL), 94–114 (LLNM…FHYW), 122–142 (IPLH…LSIL), 148–168 (LLNP…GAWG), 178–198 (IMAY…PYNP), 200–220 (LTLL…ITLM), 240–260 (ILTM…LTGF), 278–298 (LSTL…RLIY), and 325–345 (FILP…SQLI).

This sequence belongs to the complex I subunit 2 family. Core subunit of respiratory chain NADH dehydrogenase (Complex I) which is composed of 45 different subunits. Interacts with TMEM242.

Its subcellular location is the mitochondrion inner membrane. The catalysed reaction is a ubiquinone + NADH + 5 H(+)(in) = a ubiquinol + NAD(+) + 4 H(+)(out). Core subunit of the mitochondrial membrane respiratory chain NADH dehydrogenase (Complex I) which catalyzes electron transfer from NADH through the respiratory chain, using ubiquinone as an electron acceptor. Essential for the catalytic activity and assembly of complex I. This Rattus norvegicus (Rat) protein is NADH-ubiquinone oxidoreductase chain 2.